The sequence spans 2148 residues: General transcription factor 3C polypeptide 1 (2148 aa).

Positions 473–487 (GEEAFLSDSESEEES) are enriched in acidic residues. Disordered stretches follow at residues 473–568 (GEEA…FDPH) and 587–609 (NPKE…KPHK). Basic residues predominate over residues 491-502 (GKRRGRGSRGHS). A Glycyl lysine isopeptide (Lys-Gly) (interchain with G-Cter in SUMO2) cross-link involves residue Lys533. Ser666 carries the phosphoserine modification. Disordered stretches follow at residues 717–771 (STAN…EKMG) and 818–863 (TGEQ…SSWE). 2 stretches are compositionally biased toward basic and acidic residues: residues 759-770 (ESTRVKKTDEKM) and 825-835 (HSERKTGKQEP). Glycyl lysine isopeptide (Lys-Gly) (interchain with G-Cter in SUMO2) cross-links involve residues Lys769 and Lys832. A Phosphoserine modification is found at Ser1062. The segment covering 1186-1195 (EHFELDREPT) has biased composition (basic and acidic residues). Disordered stretches follow at residues 1186–1238 (EHFE…KKLR), 1597–1627 (KSLG…SVEV), 1823–1881 (KASG…LPAK), 1893–1928 (SPRP…ESVG), and 2127–2148 (PRPS…ATSR). Thr1195 is subject to Phosphothreonine. Residues 1198–1214 (RNRKVRGGKSQKRKRLK) are compositionally biased toward basic residues. The segment covering 1228-1238 (EHPEAKSKKLR) has biased composition (basic and acidic residues). Positions 1605–1616 (LDDDDEEEDLDE) are enriched in acidic residues. 3 positions are modified to phosphoserine: Ser1624, Ser1853, and Ser1893. Residues 1903 to 1912 (EAQAQFAAPE) show a composition bias toward low complexity. Polar residues predominate over residues 2132-2148 (SCYQSSAQPSTGVATSR).

This sequence belongs to the TFIIIC subunit 1 family. Part of the TFIIIC subcomplex TFIIIC2, consisting of six subunits, GTF3C1, GTF3C2, GTF3C3, GTF3C4, GTF3C5 and GTF3C6. Interacts with IGHMBP2. Interacts with MAF1.

It is found in the nucleus. Its function is as follows. Required for RNA polymerase III-mediated transcription. Component of TFIIIC that initiates transcription complex assembly on tRNA and is required for transcription of 5S rRNA and other stable nuclear and cytoplasmic RNAs. Binds to the box B promoter element. The chain is General transcription factor 3C polypeptide 1 (Gtf3c1) from Rattus norvegicus (Rat).